We begin with the raw amino-acid sequence, 483 residues long: Linamarin synthase 1 (483 aa).

His22 functions as the Proton acceptor in the catalytic mechanism. His22 is an an anthocyanidin binding site. Asp124 acts as the Charge relay in catalysis. UDP-alpha-D-glucose contacts are provided by Thr146, Val360, Gln362, His377, Trp380, Asn381, Ser382, and Glu385. Ala400 contributes to the an anthocyanidin binding site. UDP-alpha-D-glucose contacts are provided by Glu401 and Gln402.

The protein belongs to the UDP-glycosyltransferase family. In terms of tissue distribution, expressed in the cortex, xylem and phloem parenchyma, and in specific cells in the endodermis of the petiole of the first unfolded leaf.

It carries out the reaction 2-hydroxy-2-methylpropanenitrile + UDP-alpha-D-glucose = linamarin + UDP + H(+). In terms of biological role, UDP-glucosyltransferase catalyzing in planta synthesis of cyanogenic glucosides. Able to glucosylate acetone cyanohydrin and 2-hydroxy-2-methylbutyronitrile, forming linamarin and lotaustralin. Also accepts, to some extent, a wide range of potential acceptor substrates, including simple alcohols, flavonoids, isoflavonoids and other hydroxynitriles such as p-hydroxymandelonitrile, mandelonitrile, (E)-4-hydroxy-2-methylbut-2-enenitrile and (E)- 2-(hydroxymethyl)but-2-enenitrile. The sequence is that of Linamarin synthase 1 from Manihot esculenta (Cassava).